Consider the following 93-residue polypeptide: Small ribosomal subunit protein uS17 (93 aa).

Belongs to the universal ribosomal protein uS17 family. Part of the 30S ribosomal subunit.

Its function is as follows. One of the primary rRNA binding proteins, it binds specifically to the 5'-end of 16S ribosomal RNA. The protein is Small ribosomal subunit protein uS17 of Corynebacterium kroppenstedtii (strain DSM 44385 / JCM 11950 / CIP 105744 / CCUG 35717).